We begin with the raw amino-acid sequence, 495 residues long: MAENQANAAADEAAEPIVGHVTRIQGSVIDVEFPVGHMPDIYNALTVEIKQMGQQEEGEVKDSVITLEVEQHLGDSTARCVALKSTDGLVRGAIVHDTGGPIEVPVGDVTKGHVFDVSGHILNKKPGEKIVIKERWPIHRNPPAFDQLESKTQMFETGIKVIDLLTPYVQGGKIGLFGGAGVGKTVLIQEMIQRVAQNHGGVSVFAGVGERTREGNDLIGEMDEAGVLEKTALVFGQMDEQPGTRLRVPLTALTMAEYFRDVQNQDVLLFIDNIFRFTQAGSEVSTLLGRMPSAVGYQPNLADEMGSLQERITSTRGHSITSLQAIYVPADDYTDPAPATTFAHLDATTELSRDIASRGIYPAVDPLASTSRILDPRYVGQAHYDCANRVKAILQRNKELQDIIALIGIDELGEEDKTTVNRARKIEQFLGQNFYVAEKFTGVPGSYVPAEETIEAFTRICDGVYDNVPEQAFSGIGGIEDLEKKWHKMQKEYGD.

Residue 178-185 (GGAGVGKT) participates in ATP binding.

It belongs to the ATPase alpha/beta chains family. F-type ATPases have 2 components, CF(1) - the catalytic core - and CF(0) - the membrane proton channel. CF(1) has five subunits: alpha(3), beta(3), gamma(1), delta(1), epsilon(1). CF(0) has three main subunits: a(1), b(2) and c(9-12). The alpha and beta chains form an alternating ring which encloses part of the gamma chain. CF(1) is attached to CF(0) by a central stalk formed by the gamma and epsilon chains, while a peripheral stalk is formed by the delta and b chains.

The protein resides in the cell membrane. The catalysed reaction is ATP + H2O + 4 H(+)(in) = ADP + phosphate + 5 H(+)(out). Functionally, produces ATP from ADP in the presence of a proton gradient across the membrane. The catalytic sites are hosted primarily by the beta subunits. This Bifidobacterium animalis subsp. lactis (strain AD011) protein is ATP synthase subunit beta.